The chain runs to 579 residues: Cyclin-T1-5 (579 aa).

2 disordered regions span residues 1–27 (MAGV…HEKQ) and 271–419 (RVPA…GDAL). A compositionally biased stretch (polar residues) spans 11-20 (YSESGVSSHS). Over residues 274-283 (ASQGSEVESS) the composition is skewed to low complexity. Positions 306-334 (SRQTSSVRSTHEQSNSDNHGGSSKGVLNQ) are enriched in polar residues. Composition is skewed to basic and acidic residues over residues 349-380 (DNKE…EAPH) and 389-414 (PGKD…RNVD). Serine 423 carries the phosphoserine modification. Basic and acidic residues-rich tracts occupy residues 474 to 512 (DEKT…KNTE), 538 to 556 (KQSE…ESHK), and 563 to 579 (HHGD…NNHS). Positions 474–579 (DEKTKERKVQ…RRHSQENNHS (106 aa)) are disordered.

It belongs to the cyclin family. Cyclin T subfamily.

In Arabidopsis thaliana (Mouse-ear cress), this protein is Cyclin-T1-5 (CYCT1-5).